A 424-amino-acid polypeptide reads, in one-letter code: MDKLRIKGGKSLAGSVDISGAKNAALPELCAALLTAETVTLQNVPGLQDVATMLKLIRNMGVEAERSAHAPGTVILNAGPLSSPEAPYELVKTMRASVLALGPLLARFGEATVSLPGGCAIGSRPVDQHIKGLQAMGADIIVEHGYMLARLPKGQTRLKGAAITTDMVTVTGTENFLMAATLAEGETILENAAQEPEIGDLAEMLIKMGAKIEGHGSRRIRIQGVERLHGCTHQVVADRIETGTFLCAVAAAGGDVVLNHGRADHLEVVIEKLREAGATVTAGEGFIRIQASGRMKAQSFRTTEYPGFPTDMQAQFMALNAIAQGTSTVTETIFENRFMHVNEMVRLGAKIQIEGKVCVINGVEQLSGATVMATDLRASASLVIAGLVASGETFVERIYHLDRGYDQMEAKLRGIGADIERMKA.

22 to 23 (KN) serves as a coordination point for phosphoenolpyruvate. Residue arginine 95 coordinates UDP-N-acetyl-alpha-D-glucosamine. Cysteine 119 (proton donor) is an active-site residue. Cysteine 119 carries the post-translational modification 2-(S-cysteinyl)pyruvic acid O-phosphothioketal. UDP-N-acetyl-alpha-D-glucosamine contacts are provided by residues 124 to 128 (RPVDQ), aspartate 311, and isoleucine 333.

It belongs to the EPSP synthase family. MurA subfamily.

The protein localises to the cytoplasm. The catalysed reaction is phosphoenolpyruvate + UDP-N-acetyl-alpha-D-glucosamine = UDP-N-acetyl-3-O-(1-carboxyvinyl)-alpha-D-glucosamine + phosphate. It functions in the pathway cell wall biogenesis; peptidoglycan biosynthesis. Its function is as follows. Cell wall formation. Adds enolpyruvyl to UDP-N-acetylglucosamine. In Polaromonas naphthalenivorans (strain CJ2), this protein is UDP-N-acetylglucosamine 1-carboxyvinyltransferase.